Consider the following 479-residue polypeptide: Type I inositol polyphosphate 5-phosphatase 8 (479 aa).

Catalytic stretches follow at residues 300-315 (DKVI…LRAS) and 379-394 (KRRT…WKGD).

It belongs to the inositol polyphosphate 5-phosphatase family.

The polypeptide is Type I inositol polyphosphate 5-phosphatase 8 (Arabidopsis thaliana (Mouse-ear cress)).